A 389-amino-acid chain; its full sequence is Tryptophan 2,3-dioxygenase (389 aa).

Residues 60–64 (FIITH) and Arg131 each bind substrate. His316 lines the heme pocket. Thr331 is a binding site for substrate.

This sequence belongs to the tryptophan 2,3-dioxygenase family. Homotetramer. Dimer of dimers. It depends on heme as a cofactor.

The catalysed reaction is L-tryptophan + O2 = N-formyl-L-kynurenine. Its pathway is amino-acid degradation; L-tryptophan degradation via kynurenine pathway; L-kynurenine from L-tryptophan: step 1/2. It functions in the pathway pigment biosynthesis; ommochrome biosynthesis. In terms of biological role, heme-dependent dioxygenase that catalyzes the oxidative cleavage of the L-tryptophan (L-Trp) pyrrole ring and converts L-tryptophan to N-formyl-L-kynurenine. Catalyzes the oxidative cleavage of the indole moiety. This chain is Tryptophan 2,3-dioxygenase, found in Mayetiola destructor (Hessian fly).